The primary structure comprises 241 residues: DnaA regulatory inactivator Hda (241 aa).

The protein belongs to the DnaA family. HdA subfamily. As to quaternary structure, the active form seems to be an ADP-bound monomer. Forms the RIDA complex (regulatory inactivation of DnaA) of ATP-DnaA, ADP-Hda and the DNA-loaded beta sliding clamp (dnaN).

Mediates the interaction of DNA replication initiator protein DnaA with DNA polymerase subunit beta sliding clamp (dnaN). Stimulates hydrolysis of ATP-DnaA to ADP-DnaA, rendering DnaA inactive for reinitiation, a process called regulatory inhibition of DnaA or RIDA. The chain is DnaA regulatory inactivator Hda from Salmonella agona (strain SL483).